Here is a 175-residue protein sequence, read N- to C-terminus: Albumin-1 (175 aa).

Residues Cys-135 and Cys-141 are joined by a disulfide bond.

Belongs to the protease inhibitor I3 (leguminous Kunitz-type inhibitor) family.

Functionally, 2S seed storage protein. This Psophocarpus tetragonolobus (Winged bean) protein is Albumin-1.